Reading from the N-terminus, the 437-residue chain is Probable indole-3-pyruvate monooxygenase YUCCA3 (437 aa).

An FAD-binding site is contributed by 41-46; it reads GAGPSG. Position 212 to 217 (212 to 217) interacts with NADP(+); that stretch reads GCGNSG.

It belongs to the FMO family. FAD is required as a cofactor.

The catalysed reaction is indole-3-pyruvate + NADPH + O2 + H(+) = (indol-3-yl)acetate + CO2 + NADP(+) + H2O. The protein operates within plant hormone metabolism; auxin biosynthesis. In terms of biological role, involved in auxin biosynthesis. Belongs to the set of redundant YUCCA genes probably responsible for auxin biosynthesis in roots. The protein is Probable indole-3-pyruvate monooxygenase YUCCA3 (YUC3) of Arabidopsis thaliana (Mouse-ear cress).